Reading from the N-terminus, the 505-residue chain is Glutamate--tRNA ligase (505 aa).

The short motif at 12 to 22 is the 'HIGH' region element; that stretch reads PSPTGPLHIGG. The short motif at 260 to 264 is the 'KMSKS' region element; that stretch reads KLSKR. Lysine 263 serves as a coordination point for ATP.

Belongs to the class-I aminoacyl-tRNA synthetase family. Glutamate--tRNA ligase type 1 subfamily. Monomer.

It localises to the cytoplasm. It carries out the reaction tRNA(Glu) + L-glutamate + ATP = L-glutamyl-tRNA(Glu) + AMP + diphosphate. In terms of biological role, catalyzes the attachment of glutamate to tRNA(Glu) in a two-step reaction: glutamate is first activated by ATP to form Glu-AMP and then transferred to the acceptor end of tRNA(Glu). The sequence is that of Glutamate--tRNA ligase from Porphyromonas gingivalis (strain ATCC BAA-308 / W83).